The primary structure comprises 171 residues: UPF0303 protein YPTS_2661 (171 aa).

The protein belongs to the UPF0303 family.

In Yersinia pseudotuberculosis serotype IB (strain PB1/+), this protein is UPF0303 protein YPTS_2661.